The primary structure comprises 233 residues: Orotidine 5'-phosphate decarboxylase (233 aa).

Substrate-binding positions include aspartate 11, lysine 34, 61–70 (DLKLHDIPNT), threonine 117, arginine 179, glutamine 188, glycine 208, and arginine 209. Lysine 63 acts as the Proton donor in catalysis.

The protein belongs to the OMP decarboxylase family. Type 1 subfamily. As to quaternary structure, homodimer.

It carries out the reaction orotidine 5'-phosphate + H(+) = UMP + CO2. The protein operates within pyrimidine metabolism; UMP biosynthesis via de novo pathway; UMP from orotate: step 2/2. Functionally, catalyzes the decarboxylation of orotidine 5'-monophosphate (OMP) to uridine 5'-monophosphate (UMP). The sequence is that of Orotidine 5'-phosphate decarboxylase from Streptococcus pneumoniae (strain JJA).